A 753-amino-acid chain; its full sequence is Polyadenylate-binding protein, cytoplasmic and nuclear (753 aa).

Residues 1-43 (MSAEASTTPAAETPVNGTPETSTTPAAPAAEATAAETAAPSTS) are compositionally biased toward low complexity. The tract at residues 1 to 49 (MSAEASTTPAAETPVNGTPETSTTPAAPAAEATAAETAAPSTSQPHSAS) is disordered. RRM domains follow at residues 48–126 (ASLY…WSQR), 136–213 (GNVF…HHIS), 229–306 (TNVY…RAQK), and 332–460 (VNLY…LAQR). 3 disordered regions span residues 363-417 (VMRD…SDKK), 607-649 (RGPG…PAAG), and 727-753 (GTEG…ENKS). The span at 376–417 (DSDKEKKEESKEEKPEAAEKTEEAAKESGDDQDKENKKSDKK) shows a compositional bias: basic and acidic residues. Positions 607–619 (RGPGYGQGRGGVP) are enriched in gly residues. Residues 633 to 649 (QNAQPAAGRGEEAPAAG) are compositionally biased toward low complexity. Positions 647 to 724 (AAGLTAQSLA…ALSVYDEYMK (78 aa)) constitute a PABC domain. Basic and acidic residues predominate over residues 737–753 (PKPKEAATEESTEENKS).

It belongs to the polyadenylate-binding protein type-1 family.

The protein localises to the cytoplasm. It is found in the nucleus. Its function is as follows. Binds the poly(A) tail of mRNA. Appears to be an important mediator of the multiple roles of the poly(A) tail in mRNA biogenesis, stability and translation. In the nucleus, involved in both mRNA cleavage and polyadenylation. Is also required for efficient mRNA export to the cytoplasm. Acts in concert with a poly(A)-specific nuclease (PAN) to affect poly(A) tail shortening, which may occur concomitantly with either nucleocytoplasmic mRNA transport or translational initiation. In the cytoplasm, stimulates translation initiation and regulates mRNA decay through translation termination-coupled poly(A) shortening, probably mediated by PAN. This Aspergillus terreus (strain NIH 2624 / FGSC A1156) protein is Polyadenylate-binding protein, cytoplasmic and nuclear (pab1).